Reading from the N-terminus, the 453-residue chain is Probable glucan endo-1,3-beta-glucosidase eglC (453 aa).

The N-terminal stretch at M1–A18 is a signal peptide. Catalysis depends on E128, which acts as the Proton donor. Residue N183 is glycosylated (N-linked (GlcNAc...) asparagine). Residue E239 is the Nucleophile of the active site. N-linked (GlcNAc...) asparagine glycans are attached at residues N364, N368, and N376. Positions T370 to P380 are enriched in polar residues. Residues T370–S423 are disordered. 2 stretches are compositionally biased toward low complexity: residues S389–S402 and S410–S423. The GPI-anchor amidated asparagine moiety is linked to residue N430. A propeptide spans S431 to L453 (removed in mature form).

It belongs to the glycosyl hydrolase 17 family. The GPI-anchor is attached to the protein in the endoplasmic reticulum and serves to target the protein to the cell surface. There, the glucosamine-inositol phospholipid moiety is cleaved off and the GPI-modified mannoprotein is covalently attached via its lipidless GPI glycan remnant to the 1,6-beta-glucan of the outer cell wall layer.

The protein localises to the cell membrane. The protein resides in the secreted. It is found in the cell wall. The enzyme catalyses Hydrolysis of (1-&gt;3)-beta-D-glucosidic linkages in (1-&gt;3)-beta-D-glucans.. Functionally, glucanases play a role in cell expansion during growth, in cell-cell fusion during mating, and in spore release during sporulation. This enzyme may be involved in beta-glucan degradation and also function biosynthetically as a transglycosylase. This chain is Probable glucan endo-1,3-beta-glucosidase eglC (eglC), found in Aspergillus clavatus (strain ATCC 1007 / CBS 513.65 / DSM 816 / NCTC 3887 / NRRL 1 / QM 1276 / 107).